The following is a 107-amino-acid chain: Integration host factor subunit beta (107 aa).

The disordered stretch occupies residues 78–107; it reads PHFKPGKELRERVDGRAGEPLKADEPDDER. The segment covering 82 to 101 has biased composition (basic and acidic residues); sequence PGKELRERVDGRAGEPLKAD.

Belongs to the bacterial histone-like protein family. Heterodimer of an alpha and a beta chain.

Its function is as follows. This protein is one of the two subunits of integration host factor, a specific DNA-binding protein that functions in genetic recombination as well as in transcriptional and translational control. This Burkholderia multivorans (strain ATCC 17616 / 249) protein is Integration host factor subunit beta.